We begin with the raw amino-acid sequence, 347 residues long: Uroporphyrinogen decarboxylase (347 aa).

Substrate contacts are provided by residues Arg-24–Arg-28, Asp-74, Tyr-145, Ser-200, and His-315.

It belongs to the uroporphyrinogen decarboxylase family. As to quaternary structure, homodimer.

Its subcellular location is the cytoplasm. It carries out the reaction uroporphyrinogen III + 4 H(+) = coproporphyrinogen III + 4 CO2. Its pathway is porphyrin-containing compound metabolism; protoporphyrin-IX biosynthesis; coproporphyrinogen-III from 5-aminolevulinate: step 4/4. Its function is as follows. Catalyzes the decarboxylation of four acetate groups of uroporphyrinogen-III to yield coproporphyrinogen-III. The chain is Uroporphyrinogen decarboxylase from Hydrogenobaculum sp. (strain Y04AAS1).